The sequence spans 62 residues: Ranacyclin-T (62 aa).

The signal sequence occupies residues 1 to 22 (MFTMKKTLLVLFFLGVVSLSLC). Positions 23 to 43 (VEERDADEEDGGEVMEEEVKR) are excised as a propeptide. Cys49 and Cys59 form a disulfide bridge. Lysine amide is present on Lys60.

This sequence belongs to the frog skin active peptide (FSAP) family. Brevinin subfamily. Expressed by the skin granular glands.

The protein localises to the secreted. In terms of biological role, has antibacterial activity against Gram-positive bacteria B.megaterium Bm11, S.lentus and M.luteus, and Gram-negative bacteria E.coli D22, Y.pseudotuberculosis YP III and P.syringae pv tabaci, and antifungal activity against C.albicans ATCC 10231, C.tropicalis, C.guiller-mondii and P.nicotianae spores. Has weak hemolytic activity. The mature peptide inserts into the hydrophobic core of the bacterial cell membrane and increases permeability without disrupting membrane integrity. Probably binds to the outer membrane surface before aggregating to form transmembrane pores. This is Ranacyclin-T (RNCT) from Rana temporaria (European common frog).